The sequence spans 452 residues: Trigger factor (452 aa).

Residues 171–256 (GDRVTLAFKG…ATLIEAPQDA (86 aa)) form the PPIase FKBP-type domain.

Belongs to the FKBP-type PPIase family. Tig subfamily.

Its subcellular location is the cytoplasm. It catalyses the reaction [protein]-peptidylproline (omega=180) = [protein]-peptidylproline (omega=0). Its function is as follows. Involved in protein export. Acts as a chaperone by maintaining the newly synthesized protein in an open conformation. Functions as a peptidyl-prolyl cis-trans isomerase. In Afipia carboxidovorans (strain ATCC 49405 / DSM 1227 / KCTC 32145 / OM5) (Oligotropha carboxidovorans), this protein is Trigger factor.